The following is a 251-amino-acid chain: HTH-type transcriptional regulator UlaR (251 aa).

The HTH deoR-type domain maps to 3–58 (EAQRHQILLEMLAQLGFVTVEKVVERLGISPATARRDINKLDESGKLKKVRNGAEA). The H-T-H motif DNA-binding region spans 20 to 39 (VTVEKVVERLGISPATARRD).

The protein localises to the cytoplasm. Represses ulaG and the ulaABCDEF operon. The polypeptide is HTH-type transcriptional regulator UlaR (Escherichia coli O139:H28 (strain E24377A / ETEC)).